Here is a 446-residue protein sequence, read N- to C-terminus: Exodeoxyribonuclease 7 large subunit (446 aa).

Belongs to the XseA family. As to quaternary structure, heterooligomer composed of large and small subunits.

The protein localises to the cytoplasm. The catalysed reaction is Exonucleolytic cleavage in either 5'- to 3'- or 3'- to 5'-direction to yield nucleoside 5'-phosphates.. Its function is as follows. Bidirectionally degrades single-stranded DNA into large acid-insoluble oligonucleotides, which are then degraded further into small acid-soluble oligonucleotides. The protein is Exodeoxyribonuclease 7 large subunit of Streptococcus thermophilus (strain ATCC BAA-250 / LMG 18311).